The primary structure comprises 270 residues: Nuclease PA3 (270 aa).

A divalent metal cation-binding residues include W1, H6, H15, D45, and H60. 1–6 contacts substrate; that stretch reads WGALGH. Substrate-binding positions include 45–51, 60–63, and 73–78; these read DEYRLTS, HFID, and NVDYER. Intrachain disulfides connect C72/C217 and C80/C85. Residue N92 participates in substrate binding. N92 carries N-linked (GlcNAc...) asparagine glycosylation. The a divalent metal cation site is built by H116, D120, and H126. A substrate binding region spans residues 116–164; the sequence is HFIGDMTQPLHDEAYAVGGNKINVTFDGYHDNLHSDWDTYMPQKLIGGH. An N-linked (GlcNAc...) asparagine glycan is attached at N138. A divalent metal cation-binding residues include H149 and D153. Residues N184 and N197 are each glycosylated (N-linked (GlcNAc...) asparagine).

The protein belongs to the nuclease type I family. It depends on Zn(2+) as a cofactor.

It is found in the secreted. The catalysed reaction is a ribonucleoside 3'-phosphate + H2O = a ribonucleoside + phosphate. Its function is as follows. Hydrolyzes only single-stranded DNA and RNA without apparent specificity for bases. This Penicillium sp protein is Nuclease PA3.